Consider the following 516-residue polypeptide: 3-phosphoshikimate 1-carboxyvinyltransferase, chloroplastic (516 aa).

A chloroplast-targeting transit peptide spans 1–72 (MAQINNMAQG…RISASVATAQ (72 aa)). 3 residues coordinate 3-phosphoshikimate: K95, S96, and R100. K95 provides a ligand contact to phosphoenolpyruvate. Positions 173 and 203 each coordinate phosphoenolpyruvate. 6 residues coordinate 3-phosphoshikimate: S250, S251, Q252, S278, D403, and K430. Position 252 (Q252) interacts with phosphoenolpyruvate. D403 functions as the Proton acceptor in the catalytic mechanism. Residues R434, R476, and K501 each coordinate phosphoenolpyruvate.

The protein belongs to the EPSP synthase family. As to expression, mostly expressed in flower petals, and, to a lower extent, in roots, stems and anthers, but barely in leaves.

It localises to the plastid. It is found in the chloroplast. It catalyses the reaction 3-phosphoshikimate + phosphoenolpyruvate = 5-O-(1-carboxyvinyl)-3-phosphoshikimate + phosphate. The protein operates within metabolic intermediate biosynthesis; chorismate biosynthesis; chorismate from D-erythrose 4-phosphate and phosphoenolpyruvate: step 6/7. Competitively inhibited by glyphosate. Catalyzes the transfer of the enolpyruvyl moiety of phosphoenolpyruvate (PEP) to the 5-hydroxyl of shikimate-3-phosphate (S3P) to produce enolpyruvyl shikimate-3-phosphate and inorganic phosphate. Involved in the accumulation of volatile benzoides in flowers, scent attracting pollinators (e.g. the night-active hawkmoth pollinator Manduca sexta). This is 3-phosphoshikimate 1-carboxyvinyltransferase, chloroplastic from Petunia hybrida (Petunia).